The chain runs to 726 residues: Catalase-peroxidase (726 aa).

The interval 1-33 is disordered; it reads MSTSDDIHNTTATGKCPFHQGGHDQSAGAGTTT. The tryptophyl-tyrosyl-methioninium (Trp-Tyr) (with M-252) cross-link spans 105-226; sequence WHGAGTYRSI…LGATEMGLIY (122 aa). Histidine 106 serves as the catalytic Proton acceptor. The tryptophyl-tyrosyl-methioninium (Tyr-Met) (with W-105) cross-link spans 226-252; that stretch reads YVNPEGPDHSGEPLSAAAAIRATFGNM. Histidine 267 contributes to the heme b binding site.

The protein belongs to the peroxidase family. Peroxidase/catalase subfamily. As to quaternary structure, homodimer or homotetramer. Heme b is required as a cofactor. Post-translationally, formation of the three residue Trp-Tyr-Met cross-link is important for the catalase, but not the peroxidase activity of the enzyme.

The enzyme catalyses H2O2 + AH2 = A + 2 H2O. It carries out the reaction 2 H2O2 = O2 + 2 H2O. Functionally, bifunctional enzyme with both catalase and broad-spectrum peroxidase activity. This chain is Catalase-peroxidase, found in Shigella boydii serotype 4 (strain Sb227).